We begin with the raw amino-acid sequence, 232 residues long: Modulator of macroautophagy TMEM150B (232 aa).

Topologically, residues 1-6 are cytoplasmic; sequence MWAWAL. A helical membrane pass occupies residues 7 to 27; sequence LPVFLAVFGTVGLWAVYAIAV. Topologically, residues 28–50 are extracellular; that stretch reads SNNSVNITIEFPYISTCGAYTPQ. Asn-29 and Asn-33 each carry an N-linked (GlcNAc...) asparagine glycan. A helical membrane pass occupies residues 51 to 71; that stretch reads SCLFAQICNICCVLALWIVVI. Residues 72 to 83 lie on the Cytoplasmic side of the membrane; sequence RFQQIRDLGRSS. A helical membrane pass occupies residues 84–104; that stretch reads HLNTAGLVLGFISSIGISILG. Over 105–115 the chain is Extracellular; the sequence is NFQQTIIQEVH. A helical membrane pass occupies residues 116–136; the sequence is LLGALMAFFLGLAYFWIQAFI. The Cytoplasmic portion of the chain corresponds to 137–153; that stretch reads TYFSPPSRDNKWLVPVR. Residues 154 to 174 form a helical membrane-spanning segment; sequence FVLCSQCTCMVICMFVLHSTG. Residues 175-177 are Extracellular-facing; it reads FRS. The chain crosses the membrane as a helical span at residues 178–198; the sequence is AAAICEWILVMCFFALFGVFA. Over 199–232 the chain is Cytoplasmic; sequence AEFRHIDFHKLTVQKEGLKVANNDNVVWTVQDVQ.

Belongs to the DRAM/TMEM150 family.

The protein localises to the cell membrane. The protein resides in the endosome membrane. It is found in the cytoplasmic vesicle. Its subcellular location is the autophagosome membrane. Its function is as follows. Modulator of macroautophagy that causes accumulation of autophagosomes under basal conditions and enhances autophagic flux. Represses cell death and promotes long-term clonogenic survival of cells grown in the absence of glucose in a macroautophagy-independent manner. May have some role in extracellular matrix engulfment or growth factor receptor recycling, both of which can modulate cell survival. The chain is Modulator of macroautophagy TMEM150B from Danio rerio (Zebrafish).